We begin with the raw amino-acid sequence, 174 residues long: Cytoglobin-1 (174 aa).

The 151-residue stretch at 15 to 165 (SLTEEDVCVI…LYWQMNRVYA (151 aa)) folds into the Globin domain. The heme b site is built by H78 and H110.

Belongs to the globin family. In terms of assembly, monomeric. As to expression, expressed in all tissues examined with highest levels in brain, eye, gut and heart.

The protein localises to the cytoplasm. Its subcellular location is the nucleus. The catalysed reaction is Fe(II)-heme b-[protein] + nitric oxide + O2 = Fe(III)-heme b-[protein] + nitrate. It catalyses the reaction Fe(III)-heme b-[protein] + nitric oxide + H2O = Fe(II)-heme b-[protein] + nitrite + 2 H(+). It carries out the reaction 2 superoxide + 2 H(+) = H2O2 + O2. The enzyme catalyses H2O2 + AH2 = A + 2 H2O. Functionally, probable multifunctional globin with a hexacoordinated heme iron required for the catalysis of various reactions depending on redox condition of the cell as well as oxygen availability. Has a nitric oxide dioxygenase (NOD) activity and is most probably involved in cell-mediated and oxygen-dependent nitric oxide consumption. Under normoxic conditions functions as a nitric oxide dioxygenase (NOD) but under hypoxic conditions the globin may switch its function to that of a nitrite (NO2) reductase (NiR), generating nitric oxide. Could also have peroxidase and superoxide dismutase activities, detoxifying reactive oxygen species and protecting cells against oxidative stress. Also binds dioxygen with low affinity and could function as an oxygen sensor but has probably no function as a respiratory oxygen carrier. The protein is Cytoglobin-1 (cygb1) of Danio rerio (Zebrafish).